The primary structure comprises 424 residues: Serine--tRNA ligase (424 aa).

230–232 (TAE) serves as a coordination point for L-serine. Residue 261 to 263 (RAE) participates in ATP binding. Residue Glu-284 participates in L-serine binding. Residue 348–351 (EISS) coordinates ATP. Ser-384 contributes to the L-serine binding site.

This sequence belongs to the class-II aminoacyl-tRNA synthetase family. Type-1 seryl-tRNA synthetase subfamily. Homodimer. The tRNA molecule binds across the dimer.

Its subcellular location is the cytoplasm. It catalyses the reaction tRNA(Ser) + L-serine + ATP = L-seryl-tRNA(Ser) + AMP + diphosphate + H(+). It carries out the reaction tRNA(Sec) + L-serine + ATP = L-seryl-tRNA(Sec) + AMP + diphosphate + H(+). The protein operates within aminoacyl-tRNA biosynthesis; selenocysteinyl-tRNA(Sec) biosynthesis; L-seryl-tRNA(Sec) from L-serine and tRNA(Sec): step 1/1. In terms of biological role, catalyzes the attachment of serine to tRNA(Ser). Is also able to aminoacylate tRNA(Sec) with serine, to form the misacylated tRNA L-seryl-tRNA(Sec), which will be further converted into selenocysteinyl-tRNA(Sec). The sequence is that of Serine--tRNA ligase from Carboxydothermus hydrogenoformans (strain ATCC BAA-161 / DSM 6008 / Z-2901).